A 614-amino-acid chain; its full sequence is Probable glutamate--tRNA ligase, cytoplasmic (614 aa).

Arg130–Ala132 is a binding site for L-glutamate. Residues Pro135–Leu144 carry the 'HIGH' region motif. His140 provides a ligand contact to ATP. L-glutamate contacts are provided by residues Asp166, Tyr303–Cys307, and Arg321. ATP-binding positions include Glu324 and Val359–Arg363. The short motif at Val359–Arg363 is the 'KMSKS' region element.

The protein belongs to the class-I aminoacyl-tRNA synthetase family. Glutamate--tRNA ligase type 2 subfamily.

It is found in the cytoplasm. The enzyme catalyses tRNA(Glu) + L-glutamate + ATP = L-glutamyl-tRNA(Glu) + AMP + diphosphate. This is Probable glutamate--tRNA ligase, cytoplasmic from Vairimorpha ceranae (strain BRL01) (Microsporidian parasite).